We begin with the raw amino-acid sequence, 226 residues long: Ribonuclease 3 (226 aa).

The 123-residue stretch at Leu7–Asp129 folds into the RNase III domain. Glu42 is a Mg(2+) binding site. Asp46 is an active-site residue. The Mg(2+) site is built by Asp115 and Glu118. Glu118 is an active-site residue. Positions Asp156–Lys226 constitute a DRBM domain.

The protein belongs to the ribonuclease III family. In terms of assembly, homodimer. Mg(2+) is required as a cofactor.

The protein resides in the cytoplasm. The enzyme catalyses Endonucleolytic cleavage to 5'-phosphomonoester.. Functionally, digests double-stranded RNA. Involved in the processing of primary rRNA transcript to yield the immediate precursors to the large and small rRNAs (23S and 16S). Processes some mRNAs, and tRNAs when they are encoded in the rRNA operon. Processes pre-crRNA and tracrRNA of type II CRISPR loci if present in the organism. The polypeptide is Ribonuclease 3 (Shewanella frigidimarina (strain NCIMB 400)).